A 218-amino-acid polypeptide reads, in one-letter code: Elongation factor Ts (218 aa).

An involved in Mg(2+) ion dislocation from EF-Tu region spans residues 82–85 (TDFV).

The protein belongs to the EF-Ts family.

It localises to the cytoplasm. Functionally, associates with the EF-Tu.GDP complex and induces the exchange of GDP to GTP. It remains bound to the aminoacyl-tRNA.EF-Tu.GTP complex up to the GTP hydrolysis stage on the ribosome. This chain is Elongation factor Ts, found in Prochlorococcus marinus (strain NATL2A).